Consider the following 37-residue polypeptide: Disintegrin morulustatin (37 aa).

Disulfide bonds link cysteine 12–cysteine 16, cysteine 22–cysteine 36, and cysteine 24–cysteine 31.

This sequence belongs to the venom metalloproteinase (M12B) family. P-II subfamily. P-IIa sub-subfamily. As to expression, expressed by the venom gland.

Its subcellular location is the secreted. Functionally, inhibits ADP-induced platelet aggregation in human whole blood in a concentration-dependent manner (IC(50)=89.5 nM). This Crotalus morulus (Tamaulipan rock rattlesnake) protein is Disintegrin morulustatin.